The primary structure comprises 354 residues: 5,10-methenyltetrahydromethanopterin hydrogenase (354 aa).

It belongs to the HMD family.

It carries out the reaction 5,10-methenyl-5,6,7,8-tetrahydromethanopterin + H2 = 5,10-methylenetetrahydromethanopterin + H(+). Its pathway is one-carbon metabolism; methanogenesis from CO(2); 5,10-methylene-5,6,7,8-tetrahydromethanopterin from 5,10-methenyl-5,6,7,8-tetrahydromethanopterin (hydrogen route): step 1/1. Functionally, catalyzes the reversible reduction of methenyl-H(4)MPT(+) to methylene-H(4)MPT. The protein is 5,10-methenyltetrahydromethanopterin hydrogenase of Methanococcus maripaludis (strain DSM 14266 / JCM 13030 / NBRC 101832 / S2 / LL).